Here is a 704-residue protein sequence, read N- to C-terminus: E3 ubiquitin-protein ligase MBR1 (704 aa).

Disordered stretches follow at residues Met1 to Val20, Asn37 to His61, Ser176 to Gly197, Leu245 to Gln354, Ser381 to Asn403, and Ser436 to Arg525. Residues Phe43–His61 show a composition bias toward polar residues. Composition is skewed to low complexity over residues Ala184 to Phe196 and Leu245 to Pro255. Polar residues-rich tracts occupy residues Phe281 to Leu290, Arg300 to Leu329, and Arg340 to Gln354. The span at Gln452 to Asn467 shows a compositional bias: pro residues. Positions Ser485–Ser505 are enriched in low complexity. The RING-type; atypical zinc-finger motif lies at Cys656 to Lys697.

Belongs to the RING-type zinc finger family. In terms of assembly, interacts with MED25 and UBC11.

It catalyses the reaction S-ubiquitinyl-[E2 ubiquitin-conjugating enzyme]-L-cysteine + [acceptor protein]-L-lysine = [E2 ubiquitin-conjugating enzyme]-L-cysteine + N(6)-ubiquitinyl-[acceptor protein]-L-lysine.. It participates in protein modification; protein ubiquitination. In terms of biological role, E3 ubiquitin-protein ligase that functions as a regulator of MED25 stability by targeting MED25 for degradation in a RING-H2-dependent way. Proteasome-dependent degradation of MED25 seems to activate its function as positive regulator of FLOWERING LOCUS T (FT) and is important to induce the expression of FT and consequently to promote flowering. This chain is E3 ubiquitin-protein ligase MBR1 (MBR1), found in Arabidopsis thaliana (Mouse-ear cress).